A 491-amino-acid chain; its full sequence is Iota-carrageenase (491 aa).

An N-terminal signal peptide occupies residues 1–19; the sequence is MKLQFKPVYLASIAIMAIG. Residues cysteine 422 and cysteine 490 are joined by a disulfide bond.

Belongs to the glycosyl hydrolase 82 family.

Its subcellular location is the secreted. It carries out the reaction Endohydrolysis of 1,4-beta-D-linkages between D-galactose 4-sulfate and 3,6-anhydro-D-galactose-2-sulfate in iota-carrageenans.. Hydrolyzes iota-carrageenans, sulfated 1,3-alpha-1,4-beta galactans from red algal cell walls, with an inversion of anomeric configuration. Also active against hybrid iota-/nu-carrageenan, not active against kappa- or lambda-carrageenans. In Zobellia galactanivorans (strain DSM 12802 / CCUG 47099 / CIP 106680 / NCIMB 13871 / Dsij), this protein is Iota-carrageenase.